We begin with the raw amino-acid sequence, 357 residues long: Probable dual-specificity RNA methyltransferase RlmN (357 aa).

The active-site Proton acceptor is the E92. In terms of domain architecture, Radical SAM core spans 98–336; that stretch reads HKYGLSVCVT…CGVRLEHGTD (239 aa). C105 and C341 are joined by a disulfide. [4Fe-4S] cluster contacts are provided by C112, C116, and C119. S-adenosyl-L-methionine contacts are provided by residues 164-165, S196, 219-221, and N297; these read GE and SLH. The S-methylcysteine intermediate role is filled by C341.

The protein belongs to the radical SAM superfamily. RlmN family. It depends on [4Fe-4S] cluster as a cofactor.

The protein localises to the cytoplasm. It catalyses the reaction adenosine(2503) in 23S rRNA + 2 reduced [2Fe-2S]-[ferredoxin] + 2 S-adenosyl-L-methionine = 2-methyladenosine(2503) in 23S rRNA + 5'-deoxyadenosine + L-methionine + 2 oxidized [2Fe-2S]-[ferredoxin] + S-adenosyl-L-homocysteine. The catalysed reaction is adenosine(37) in tRNA + 2 reduced [2Fe-2S]-[ferredoxin] + 2 S-adenosyl-L-methionine = 2-methyladenosine(37) in tRNA + 5'-deoxyadenosine + L-methionine + 2 oxidized [2Fe-2S]-[ferredoxin] + S-adenosyl-L-homocysteine. Specifically methylates position 2 of adenine 2503 in 23S rRNA and position 2 of adenine 37 in tRNAs. In Exiguobacterium sibiricum (strain DSM 17290 / CCUG 55495 / CIP 109462 / JCM 13490 / 255-15), this protein is Probable dual-specificity RNA methyltransferase RlmN.